The following is a 252-amino-acid chain: MTFLEEILAQKEVEVAKMPLEQVAEKRKTYSFYEFLKANTNTMQLIAEVKRASPSKGEINMGVNPVLQAKSYQAAGAGMISVLTDPVFFKGSIEDLREVAKNVGIPVLCKDFIISEKQLIRARNAGATVVLLIISALTEEKLITLFEQALALDLEVLVEVHDQEELAVAQKIGAQLIGVNNRNLHTFEVDIAVSERLASDFSSDACFISESGFRTAEDVARVSQKYDAVLVGEALMREATPEVAAKSLKVTR.

It belongs to the TrpC family.

The catalysed reaction is 1-(2-carboxyphenylamino)-1-deoxy-D-ribulose 5-phosphate + H(+) = (1S,2R)-1-C-(indol-3-yl)glycerol 3-phosphate + CO2 + H2O. Its pathway is amino-acid biosynthesis; L-tryptophan biosynthesis; L-tryptophan from chorismate: step 4/5. The polypeptide is Indole-3-glycerol phosphate synthase (Listeria monocytogenes serovar 1/2a (strain ATCC BAA-679 / EGD-e)).